The following is a 322-amino-acid chain: Arginase-1 (322 aa).

The segment at methionine 1 to glycine 27 is disordered. Serine 7 carries the post-translational modification Phosphoserine. Lysine 17 carries the post-translational modification N6-succinyllysine. A Phosphoserine modification is found at serine 72. Lysine 75 is modified (N6-succinyllysine). Positions 101, 124, 126, and 128 each coordinate Mn(2+). Residues histidine 126–asparagine 130 and threonine 137–asparagine 139 each bind substrate. Serine 163 is modified (phosphoserine). Residue aspartate 183 participates in substrate binding. Residue serine 217 is modified to Phosphoserine. Residues aspartate 232 and aspartate 234 each contribute to the Mn(2+) site. Residues threonine 246 and glutamate 277 each contribute to the substrate site.

This sequence belongs to the arginase family. Homotrimer. Interacts with CMTM6. The cofactor is Mn(2+).

The protein resides in the cytoplasm. The catalysed reaction is L-arginine + H2O = urea + L-ornithine. The protein operates within nitrogen metabolism; urea cycle; L-ornithine and urea from L-arginine: step 1/1. This is Arginase-1 (ARG1) from Sus scrofa (Pig).